Consider the following 711-residue polypeptide: Progesterone receptor (711 aa).

Residues 1 to 347 are modulating, Pro-Rich; it reads MEDKSKQCLQ…YGFDALPRKI (347 aa). NR C4-type zinc fingers lie at residues 348–368 and 384–408; these read CLICSDEASGCHYGALTCGSC and CAGRNDCIGDKIRRKNCPSCRLKKC. The segment at residues 348 to 420 is a DNA-binding region (nuclear receptor); it reads CLICSDEASG…AGMVLGGRKF (73 aa). An NR LBD domain is found at 457–691; the sequence is QEVQYFPELL…EFPEMMTEVI (235 aa).

Belongs to the nuclear hormone receptor family. NR3 subfamily. Expressed in all tissues examined: highly expressed in testis and brain. Also expressed in heart, lung, liver, kidney, stomach and small intestine.

The protein resides in the nucleus. In terms of biological role, the steroid hormones and their receptors are involved in the regulation of eukaryotic gene expression and affect cellular proliferation and differentiation in target tissues. In Rana dybowskii (Dybovsky's frog), this protein is Progesterone receptor (pgr).